A 122-amino-acid polypeptide reads, in one-letter code: Large ribosomal subunit protein uL14 (122 aa).

This sequence belongs to the universal ribosomal protein uL14 family. In terms of assembly, part of the 50S ribosomal subunit. Forms a cluster with proteins L3 and L19. In the 70S ribosome, L14 and L19 interact and together make contacts with the 16S rRNA in bridges B5 and B8.

Binds to 23S rRNA. Forms part of two intersubunit bridges in the 70S ribosome. This is Large ribosomal subunit protein uL14 from Corynebacterium efficiens (strain DSM 44549 / YS-314 / AJ 12310 / JCM 11189 / NBRC 100395).